A 120-amino-acid chain; its full sequence is Immunoglobulin kappa variable 2D-26 (120 aa).

Residues 1–20 (MRLPAQLLGLLMLWVPGSSA) form the signal peptide. The tract at residues 21–43 (EIVMTQTPLSLSITPGEQASMSC) is framework-1. The Ig-like domain maps to 21 to 120 (EIVMTQTPLS…YYCMQDAQDP (100 aa)). A disulfide bridge links C43 with C113. The segment at 44-59 (RSSQSLLHSDGYTYLY) is complementarity-determining-1. Residues 60–74 (WFLQKARPVSTLLIY) are framework-2. The tract at residues 75-81 (EVSNRFS) is complementarity-determining-2. The tract at residues 82 to 113 (GVPDRFSGSGSGTDFTLKISRVEAEDFGVYYC) is framework-3. The interval 114 to 120 (MQDAQDP) is complementarity-determining-3.

Immunoglobulins are composed of two identical heavy chains and two identical light chains; disulfide-linked.

The protein resides in the secreted. It is found in the cell membrane. Its function is as follows. V region of the variable domain of immunoglobulin light chains that participates in the antigen recognition. Immunoglobulins, also known as antibodies, are membrane-bound or secreted glycoproteins produced by B lymphocytes. In the recognition phase of humoral immunity, the membrane-bound immunoglobulins serve as receptors which, upon binding of a specific antigen, trigger the clonal expansion and differentiation of B lymphocytes into immunoglobulins-secreting plasma cells. Secreted immunoglobulins mediate the effector phase of humoral immunity, which results in the elimination of bound antigens. The antigen binding site is formed by the variable domain of one heavy chain, together with that of its associated light chain. Thus, each immunoglobulin has two antigen binding sites with remarkable affinity for a particular antigen. The variable domains are assembled by a process called V-(D)-J rearrangement and can then be subjected to somatic hypermutations which, after exposure to antigen and selection, allow affinity maturation for a particular antigen. In Homo sapiens (Human), this protein is Immunoglobulin kappa variable 2D-26.